Here is a 246-residue protein sequence, read N- to C-terminus: Probable transcriptional regulatory protein AHA_1522 (246 aa).

It belongs to the TACO1 family.

The protein localises to the cytoplasm. This chain is Probable transcriptional regulatory protein AHA_1522, found in Aeromonas hydrophila subsp. hydrophila (strain ATCC 7966 / DSM 30187 / BCRC 13018 / CCUG 14551 / JCM 1027 / KCTC 2358 / NCIMB 9240 / NCTC 8049).